The primary structure comprises 701 residues: Polyribonucleotide nucleotidyltransferase (701 aa).

The Mg(2+) site is built by Asp-483 and Asp-489. A KH domain is found at 550 to 609 (PRIYTLHIPTDKIRDVIGPGGKVIRGIIEQTGVKIDVEDDGTIHVASADEASANKAIQII). The region spanning 619–686 (GKTYLGKVVR…EGNKIKLSRK (68 aa)) is the S1 motif domain.

It belongs to the polyribonucleotide nucleotidyltransferase family. Mg(2+) serves as cofactor.

It is found in the cytoplasm. The catalysed reaction is RNA(n+1) + phosphate = RNA(n) + a ribonucleoside 5'-diphosphate. Involved in mRNA degradation. Catalyzes the phosphorolysis of single-stranded polyribonucleotides processively in the 3'- to 5'-direction. The chain is Polyribonucleotide nucleotidyltransferase from Solibacter usitatus (strain Ellin6076).